The primary structure comprises 382 residues: Protein MSN1 (382 aa).

The tract at residues 12–26 (LNENEAILTNRVAEL) is leucine-zipper. Polar residues-rich tracts occupy residues 104–114 (TLDPQGFTDGT) and 122–138 (NYTS…HPQN). 2 disordered regions span residues 104-138 (TLDP…HPQN) and 155-260 (NSQE…EEEQ). Residues 162-180 (SQQQTNSSNSISQENNSTN) are compositionally biased toward low complexity. Composition is skewed to polar residues over residues 181 to 198 (PSVD…SNLV) and 207 to 221 (NPPN…GLYI). Low complexity predominate over residues 222-231 (SSNSSQSRQS). Residues 232–253 (PNLQKVSPNHENAVESNAQESV) show a composition bias toward polar residues. Residues 266–271 (GLKRKR) carry the Nuclear localization signal motif.

The protein resides in the nucleus. Its function is as follows. May function as a transcriptional activator. Increased dosage of MSN1 restores invertase expression in yeast mutants defective in the SNF1 protein kinase, and msn1 disruption reduced derepression of invertase in the wild-type. May affect SUC2 expression. Expression of MSN1 enhances growth in iron-limiting conditions. The polypeptide is Protein MSN1 (MSN1) (Saccharomyces cerevisiae (strain ATCC 204508 / S288c) (Baker's yeast)).